Consider the following 381-residue polypeptide: Alkanesulfonate monooxygenase (381 aa).

Belongs to the SsuD family. As to quaternary structure, homotetramer.

It catalyses the reaction an alkanesulfonate + FMNH2 + O2 = an aldehyde + FMN + sulfite + H2O + 2 H(+). Catalyzes the desulfonation of aliphatic sulfonates. The polypeptide is Alkanesulfonate monooxygenase (Citrobacter koseri (strain ATCC BAA-895 / CDC 4225-83 / SGSC4696)).